The chain runs to 536 residues: Caspase recruitment domain-containing protein 9 (536 aa).

Serine 2 is subject to Phosphoserine. Zn(2+) is bound by residues aspartate 3, cysteine 10, and histidine 73. In terms of domain architecture, CARD spans 6–98 (NDDECWSVLE…QLYKKVTGKE (93 aa)). The segment at 99–116 (PARVFSMIIDASGESGLT) is linker. Coiled coils occupy residues 117-277 (QLLM…DRSS) and 332-419 (LRKD…QQLE). Lysine 125 is covalently cross-linked (Glycyl lysine isopeptide (Lys-Gly) (interchain with G-Cter in ubiquitin)). Threonine 231 carries the post-translational modification Phosphothreonine. Position 277 is a phosphoserine (serine 277). Serine 424, serine 425, serine 431, serine 450, serine 460, serine 483, and serine 498 each carry phosphoserine. Positions 427 to 536 (LEDGSPRRSQ…GSDNTDTEGS (110 aa)) are disordered. Positions 487–502 (PPEKERRRLKESFENY) are enriched in basic and acidic residues. The segment covering 503-513 (RRKRALRKMQK) has biased composition (basic residues). Phosphothreonine; by CK2 is present on residues threonine 531 and threonine 533.

In terms of assembly, monomer. Homodimer; homodimerization is mediated by the CARD domain which forms an extensive interaction with the adjacent linker and coiled-coil regions; leads to an autoinhibited state. Homomultimer; polymerizes following activation, forming a nucleating helical template that seeds BCL10-filament formation via a CARD-CARD interaction. Interacts (via CARD domain) with BCL10 (via CARD domain); interaction takes place following CARD9 activation and polymerization, leading to the formation of a filamentous CBM complex assembly. Component of a CBM complex (CARD9-BCL10, MALT1), composed of CARD9, BCL10 and MALT1. Interacts with RASGRF1. Interacts with NOD2 (via NACHT domain); interaction is direct. Interacts with RIPK2. Interacts with VHL; without leading to protein degradation. Phosphorylated at Thr-231 by PRKCD downstream of C-type lectin receptors activation: phosphorylation promotes interaction with BCL10, followed by activation of NF-kappa-B and MAP kinase p38 pathways. Phosphorylated at Thr-531 and Thr-533 by CK2 following interaction with VHL, leading to inhibit the ability to activate NF-kappa-B. In terms of processing, ubiquitinated at Lys-125 via 'Lys-27'-linked ubiquitin by TRIM62 downstream of C-type lectin receptors activation; leading to CARD9 activation, followed by activation of NF-kappa-B and MAP kinase p38 pathways. Deubiquitinated at Lys-125 by USP15, inhibiting CARD9. In terms of tissue distribution, expression is restricted to several populations of phagocytes, such as macrophages, monocytes, and dendritic cells. Highly expressed in spleen. Also detected in liver, placenta, lung, peripheral blood leukocytes and in brain.

It localises to the cytoplasm. Its activity is regulated as follows. Maintained in an autoinhibited state via homodimerization in which the CARD domain forms an extensive interaction with the adjacent linker and coiled-coil regions. Activation downstream of C-type lectin receptors, by phosphorylation by PRKCD and/or ubiquitination by TRIM62, triggers disruption of the CARD domain-coiled coil interface, CARD9 homooligomerization and BCL10 recruitment, followed by activation of NF-kappa-B and MAP kinase p38 pathways. Zinc-binding inhibits activation by stabilizing the CARD ground-state conformation and restricting its capacity to form BCL10-nucleating filaments. Functionally, adapter protein that plays a key role in innate immune response against fungi by forming signaling complexes downstream of C-type lectin receptors. CARD9-mediated signals are essential for antifungal immunity against a subset of fungi from the phylum Ascomycota. Transduces signals in myeloid cells downstream of C-type lectin receptors CLEC7A (dectin-1), CLEC6A (dectin-2) and CLEC4E (Mincle), which detect pathogen-associated molecular pattern metabolites (PAMPs), such as fungal carbohydrates, and trigger CARD9 activation. Upon activation, CARD9 homooligomerizes to form a nucleating helical template that recruits BCL10 via CARD-CARD interaction, thereby promoting polymerization of BCL10 and subsequent recruitment of MALT1: this leads to activation of NF-kappa-B and MAP kinase p38 (MAPK11, MAPK12, MAPK13 and/or MAPK14) pathways which stimulate expression of genes encoding pro-inflammatory cytokines and chemokines. CARD9 signaling in antigen-presenting cells links innate sensing of fungi to the activation of adaptive immunity and provides a cytokine milieu that induces the development and subsequent of interleukin 17-producing T helper (Th17) cells. Also involved in activation of myeloid cells via classical ITAM-associated receptors and TLR: required for TLR-mediated activation of MAPK, while it is not required for TLR-induced activation of NF-kappa-B. CARD9 can also be engaged independently of BCL10: forms a complex with RASGRF1 downstream of C-type lectin receptors, which recruits and activates HRAS, leading to ERK activation and the production of cytokines. Acts as an important regulator of the intestinal commensal fungi (mycobiota) component of the gut microbiota. Plays an essential role in antifungal immunity against dissemination of gut fungi: acts by promoting induction of antifungal IgG antibodies response in CX3CR1(+) macrophages to confer protection against disseminated C.albicans or C.auris infection. Also mediates immunity against other pathogens, such as certain bacteria, viruses and parasites; CARD9 signaling is however redundant with other innate immune responses. In response to L.monocytogenes infection, required for the production of inflammatory cytokines activated by intracellular peptidoglycan: acts by connecting NOD2 recognition of peptidoglycan to downstream activation of MAP kinases (MAPK) without activating NF-kappa-B. This chain is Caspase recruitment domain-containing protein 9, found in Homo sapiens (Human).